The following is a 428-amino-acid chain: 3-phosphoshikimate 1-carboxyvinyltransferase (428 aa).

Residues Lys23, Ser24, and Arg28 each contribute to the 3-phosphoshikimate site. Lys23 lines the phosphoenolpyruvate pocket. 2 residues coordinate phosphoenolpyruvate: Gly97 and Arg125. The 3-phosphoshikimate site is built by Ser170, Ser171, Gln172, Ser198, Asp314, Asn337, and Lys341. Gln172 provides a ligand contact to phosphoenolpyruvate. The Proton acceptor role is filled by Asp314. Residues Arg345, Arg387, and Lys412 each coordinate phosphoenolpyruvate.

Belongs to the EPSP synthase family. Monomer.

Its subcellular location is the cytoplasm. It carries out the reaction 3-phosphoshikimate + phosphoenolpyruvate = 5-O-(1-carboxyvinyl)-3-phosphoshikimate + phosphate. It functions in the pathway metabolic intermediate biosynthesis; chorismate biosynthesis; chorismate from D-erythrose 4-phosphate and phosphoenolpyruvate: step 6/7. Functionally, catalyzes the transfer of the enolpyruvyl moiety of phosphoenolpyruvate (PEP) to the 5-hydroxyl of shikimate-3-phosphate (S3P) to produce enolpyruvyl shikimate-3-phosphate and inorganic phosphate. This is 3-phosphoshikimate 1-carboxyvinyltransferase from Hamiltonella defensa subsp. Acyrthosiphon pisum (strain 5AT).